The sequence spans 812 residues: Eukaryotic translation initiation factor 3 subunit C (812 aa).

Residues 1-105 are disordered; that stretch reads MSRFFSRGYH…SDESDDEGKK (105 aa). 2 stretches are compositionally biased toward acidic residues: residues 17–40 and 48–59; these read SEDEELLTSSEEELMSSSEEEVVS and SESESAESDDDS. Residues 607 to 783 form the PCI domain; that stretch reads FHQHINLDLI…EMLIFDKGDE (177 aa).

It belongs to the eIF-3 subunit C family. Component of the eukaryotic translation initiation factor 3 (eIF-3) complex.

The protein localises to the cytoplasm. In terms of biological role, component of the eukaryotic translation initiation factor 3 (eIF-3) complex, which is involved in protein synthesis of a specialized repertoire of mRNAs and, together with other initiation factors, stimulates binding of mRNA and methionyl-tRNAi to the 40S ribosome. The eIF-3 complex specifically targets and initiates translation of a subset of mRNAs involved in cell proliferation. The sequence is that of Eukaryotic translation initiation factor 3 subunit C from Eremothecium gossypii (strain ATCC 10895 / CBS 109.51 / FGSC 9923 / NRRL Y-1056) (Yeast).